A 258-amino-acid chain; its full sequence is Snake venom serine protease 3 (258 aa).

A signal peptide spans 1-18; that stretch reads MVLIRVLANLLILQLSYA. Positions 19 to 24 are excised as a propeptide; that stretch reads QKSSEL. Positions 25-249 constitute a Peptidase S1 domain; that stretch reads IIGGHPCNIN…YTDWIQSIIA (225 aa). 6 disulfide bridges follow: Cys-31–Cys-163, Cys-50–Cys-66, Cys-98–Cys-256, Cys-142–Cys-210, Cys-174–Cys-189, and Cys-200–Cys-225. Asn-44 carries an N-linked (GlcNAc...) asparagine glycan. Catalysis depends on charge relay system residues His-65 and Asp-110. The active-site Charge relay system is the Ser-204. The N-linked (GlcNAc...) asparagine glycan is linked to Asn-239.

It belongs to the peptidase S1 family. Snake venom subfamily. As to quaternary structure, monomer. Expressed by the venom gland.

The protein localises to the secreted. In terms of biological role, snake venom serine protease that may act in the hemostasis system of the prey. The sequence is that of Snake venom serine protease 3 from Protobothrops jerdonii (Jerdon's pitviper).